The primary structure comprises 95 residues: Small ribosomal subunit protein bS6 (95 aa).

This sequence belongs to the bacterial ribosomal protein bS6 family.

Functionally, binds together with bS18 to 16S ribosomal RNA. The sequence is that of Small ribosomal subunit protein bS6 from Bacillus pumilus (strain SAFR-032).